We begin with the raw amino-acid sequence, 53 residues long: UPF0181 protein VC_A0569 (53 aa).

The protein belongs to the UPF0181 family.

This Vibrio cholerae serotype O1 (strain ATCC 39315 / El Tor Inaba N16961) protein is UPF0181 protein VC_A0569.